The sequence spans 110 residues: Nucleoid-associated protein Ent638_0951 (110 aa).

This sequence belongs to the YbaB/EbfC family. In terms of assembly, homodimer.

The protein resides in the cytoplasm. It is found in the nucleoid. Binds to DNA and alters its conformation. May be involved in regulation of gene expression, nucleoid organization and DNA protection. In Enterobacter sp. (strain 638), this protein is Nucleoid-associated protein Ent638_0951.